The chain runs to 541 residues: Carotenoid-cleaving dioxygenase, mitochondrial (541 aa).

Residues His-188, His-248, His-319, and His-535 each coordinate Fe cation.

Belongs to the carotenoid oxygenase family. The cofactor is Fe(2+). In terms of tissue distribution, widely expressed. Detected in heart, spleen, lung, intestine, colon, stomach, kidney, bladder, and prostate. Highly expressed in liver and testis (at protein level).

The protein localises to the mitochondrion. The catalysed reaction is all-trans-beta-carotene + O2 = beta-ionone + all-trans-10'-apo-beta-carotenal. It catalyses the reaction 5-cis-lycopene + O2 = 5-cis-10'-apo-lycopenal + (3E,5E)-6,10-dimethylundeca-3,5,9-trien-2-one. It carries out the reaction 13-cis-lycopene + O2 = 13-cis-10'-apo-lycopenal + (3E,5E)-6,10-dimethylundeca-3,5,9-trien-2-one. The enzyme catalyses lutein + O2 = (3R,6R)-hydroxy-alpha-ionone + (3R)-3-hydroxy-10'-apo-beta-carotenal. The catalysed reaction is lutein + O2 = (3R,6R)-3-hydroxy-10'-apo-alpha-carotenal + (3R)-hydroxy-beta-ionone. It catalyses the reaction all-trans-zeaxanthin + 2 O2 = 4,9-dimethyldodeca-2,4,6,8,10-pentaenedial + 2 (3R)-hydroxy-beta-ionone. It carries out the reaction all-trans-zeaxanthin + O2 = (3R)-3-hydroxy-10'-apo-beta-carotenal + (3R)-hydroxy-beta-ionone. The enzyme catalyses beta-cryptoxanthin + O2 = all-trans-10'-apo-beta-carotenal + (3R)-hydroxy-beta-ionone. The catalysed reaction is all-trans-10'-apo-beta-carotenal + O2 = beta-ionone + 4,9-dimethyldodeca-2,4,6,8,10-pentaenedial. It catalyses the reaction (3R)-3-hydroxy-10'-apo-beta-carotenal + O2 = 4,9-dimethyldodeca-2,4,6,8,10-pentaenedial + (3R)-hydroxy-beta-ionone. It carries out the reaction (3R,6R)-3-hydroxy-10'-apo-alpha-carotenal + O2 = (3R,6R)-hydroxy-alpha-ionone + 4,9-dimethyldodeca-2,4,6,8,10-pentaenedial. Its function is as follows. Broad specificity mitochondrial dioxygenase that mediates the asymmetric oxidative cleavage of carotenoids. Cleaves carotenes (pure hydrocarbon carotenoids) such as all-trans-beta-carotene and lycopene as well as xanthophylls (oxygenated carotenoids) such as zeaxanthin, lutein and beta-cryptoxanthin at both the 9,10 and the 9',10' carbon-carbon double bond. Through its function in carotenoids metabolism regulates oxidative stress and the production of important signaling molecules. The chain is Carotenoid-cleaving dioxygenase, mitochondrial from Mustela putorius furo (European domestic ferret).